The primary structure comprises 243 residues: MPHSKHRDYTADKQDIPYTELKACKSPWKHRTPAVKQSPVVLSEEQLKYAELTFHRTPQLQPRKQTVRRKRQGPKSAVWRVVTCVLGVLCVVLMITMGILVPKLFSGQEEQYRETSLHHLLKNDSSCDPCSHDWIAFGNNFYLFFRGTKSWAESKSACEELNSHLLDIDSKAELENLLLFEINGWILVKKNQTNWSSSENETKLQHTLIDEKKNHSCRYLRGSQFIADDCSSKKPYACEFNKM.

The Cytoplasmic portion of the chain corresponds to 1–80 (MPHSKHRDYT…RQGPKSAVWR (80 aa)). 2 short sequence motifs (ITIM motif) span residues 16–21 (IPYTEL) and 47–52 (LKYAEL). Residues 81–101 (VVTCVLGVLCVVLMITMGILV) form a helical; Signal-anchor for type II membrane protein membrane-spanning segment. At 102–243 (PKLFSGQEEQ…KPYACEFNKM (142 aa)) the chain is on the extracellular side. N-linked (GlcNAc...) asparagine glycosylation is found at Asn-123, Asn-191, Asn-194, Asn-200, and Asn-214. The region spanning 137–239 (FGNNFYLFFR…CSSKKPYACE (103 aa)) is the C-type lectin domain. 2 disulfides stabilise this stretch: Cys-158/Cys-238 and Cys-217/Cys-230.

In terms of assembly, heterodimer with KLRE1. Interacts with PTPN6. As to expression, expressed in natural killer (NK) cells.

It localises to the cell membrane. Lectin-like receptor for natural killer (NK) cells. Heterodimer formation with KLRE1 mediates inhibition of NK cell cytolytic activity. In Rattus norvegicus (Rat), this protein is Killer cell lectin-like receptor subfamily I member 1.